The chain runs to 275 residues: COP9 signalosome complex subunit 7a (275 aa).

At Ser-2 the chain carries N-acetylserine. Residues 2–159 (SAEVKVTGQN…QRLEVDYSIG (158 aa)) enclose the PCI domain. The stretch at 185–233 (LSGIEEQVSRANQHKEQQLGLKQQIESEVANLKKTIKVTTAAAAAATSQ) forms a coiled coil. Positions 227–275 (AAAATSQDPEQHLTELREPAPGTNQRQPSKKASKGKGLRGSAKIWSKSN) are disordered. The span at 235-244 (PEQHLTELRE) shows a compositional bias: basic and acidic residues. The segment covering 254–263 (PSKKASKGKG) has biased composition (basic residues).

It belongs to the CSN7/EIF3M family. CSN7 subfamily. In terms of assembly, component of the CSN complex, composed of COPS1/GPS1, COPS2, COPS3, COPS4, COPS5, COPS6, COPS7 (COPS7A or COPS7B), COPS8 and COPS9. In the complex, it probably interacts directly with COPS1, COPS2, COPS4, COPS5, COPS6 and COPS8. Interacts with PMF1. Interacts with the translation initiation factor EIF3S6. Interacts with CK2 and PKD. Interacts directly with ID3. In terms of processing, phosphorylated by CK2 and PKD kinases.

It is found in the cytoplasm. The protein localises to the nucleus. Its function is as follows. Component of the COP9 signalosome complex (CSN), a complex involved in various cellular and developmental processes. The CSN complex is an essential regulator of the ubiquitin (Ubl) conjugation pathway by mediating the deneddylation of the cullin subunits of SCF-type E3 ligase complexes, leading to decrease the Ubl ligase activity of SCF-type complexes such as SCF, CSA or DDB2. The complex is also involved in phosphorylation of p53/TP53, JUN, I-kappa-B-alpha/NFKBIA, ITPK1 and IRF8/ICSBP, possibly via its association with CK2 and PKD kinases. CSN-dependent phosphorylation of TP53 and JUN promotes and protects degradation by the Ubl system, respectively. The chain is COP9 signalosome complex subunit 7a (COPS7A) from Pongo abelii (Sumatran orangutan).